The chain runs to 181 residues: Translation initiation factor IF-3, chloroplastic (181 aa).

It belongs to the IF-3 family. In terms of assembly, monomer.

The protein resides in the plastid. It is found in the chloroplast. Functionally, IF-3 binds to the 30S ribosomal subunit and shifts the equilibrium between 70S ribosomes and their 50S and 30S subunits in favor of the free subunits, thus enhancing the availability of 30S subunits on which protein synthesis initiation begins. The protein is Translation initiation factor IF-3, chloroplastic of Galdieria sulphuraria (Red alga).